Consider the following 403-residue polypeptide: Imidazolonepropionase (403 aa).

Fe(3+) contacts are provided by histidine 74 and histidine 76. Residues histidine 74 and histidine 76 each coordinate Zn(2+). 4-imidazolone-5-propanoate is bound by residues arginine 83, tyrosine 146, and histidine 179. Tyrosine 146 contributes to the N-formimidoyl-L-glutamate binding site. Histidine 242 contributes to the Fe(3+) binding site. Histidine 242 contacts Zn(2+). Glutamine 245 contributes to the 4-imidazolone-5-propanoate binding site. Position 317 (aspartate 317) interacts with Fe(3+). Aspartate 317 is a Zn(2+) binding site. Residues asparagine 319 and glycine 321 each coordinate N-formimidoyl-L-glutamate. 4-imidazolone-5-propanoate is bound at residue threonine 322.

It belongs to the metallo-dependent hydrolases superfamily. HutI family. Zn(2+) is required as a cofactor. Requires Fe(3+) as cofactor.

The protein resides in the cytoplasm. It catalyses the reaction 4-imidazolone-5-propanoate + H2O = N-formimidoyl-L-glutamate. It functions in the pathway amino-acid degradation; L-histidine degradation into L-glutamate; N-formimidoyl-L-glutamate from L-histidine: step 3/3. In terms of biological role, catalyzes the hydrolytic cleavage of the carbon-nitrogen bond in imidazolone-5-propanoate to yield N-formimidoyl-L-glutamate. It is the third step in the universal histidine degradation pathway. The chain is Imidazolonepropionase from Sphingopyxis alaskensis (strain DSM 13593 / LMG 18877 / RB2256) (Sphingomonas alaskensis).